Consider the following 491-residue polypeptide: Aspartyl/glutamyl-tRNA(Asn/Gln) amidotransferase subunit B (491 aa).

This sequence belongs to the GatB/GatE family. GatB subfamily. Heterotrimer of A, B and C subunits.

The catalysed reaction is L-glutamyl-tRNA(Gln) + L-glutamine + ATP + H2O = L-glutaminyl-tRNA(Gln) + L-glutamate + ADP + phosphate + H(+). The enzyme catalyses L-aspartyl-tRNA(Asn) + L-glutamine + ATP + H2O = L-asparaginyl-tRNA(Asn) + L-glutamate + ADP + phosphate + 2 H(+). In terms of biological role, allows the formation of correctly charged Asn-tRNA(Asn) or Gln-tRNA(Gln) through the transamidation of misacylated Asp-tRNA(Asn) or Glu-tRNA(Gln) in organisms which lack either or both of asparaginyl-tRNA or glutaminyl-tRNA synthetases. The reaction takes place in the presence of glutamine and ATP through an activated phospho-Asp-tRNA(Asn) or phospho-Glu-tRNA(Gln). In Burkholderia lata (strain ATCC 17760 / DSM 23089 / LMG 22485 / NCIMB 9086 / R18194 / 383), this protein is Aspartyl/glutamyl-tRNA(Asn/Gln) amidotransferase subunit B.